A 208-amino-acid chain; its full sequence is Uracil phosphoribosyltransferase (208 aa).

5-phospho-alpha-D-ribose 1-diphosphate contacts are provided by residues R78, R103, and 130 to 138 (DPMLAIGGS). Residues I193 and 198–200 (GDA) each bind uracil. D199 lines the 5-phospho-alpha-D-ribose 1-diphosphate pocket.

This sequence belongs to the UPRTase family. It depends on Mg(2+) as a cofactor.

It catalyses the reaction UMP + diphosphate = 5-phospho-alpha-D-ribose 1-diphosphate + uracil. It functions in the pathway pyrimidine metabolism; UMP biosynthesis via salvage pathway; UMP from uracil: step 1/1. With respect to regulation, allosterically activated by GTP. Its function is as follows. Catalyzes the conversion of uracil and 5-phospho-alpha-D-ribose 1-diphosphate (PRPP) to UMP and diphosphate. The protein is Uracil phosphoribosyltransferase of Vibrio cholerae serotype O1 (strain ATCC 39315 / El Tor Inaba N16961).